The chain runs to 295 residues: Alpha-ketoglutarate-dependent sulfate ester dioxygenase (295 aa).

Substrate is bound at residue histidine 71. Fe cation is bound by residues histidine 98 and aspartate 100. Valine 101 is a binding site for substrate. Residue threonine 125 coordinates 2-oxoglutarate. Histidine 252 is a Fe cation binding site. Positions 263 and 267 each coordinate 2-oxoglutarate.

The protein belongs to the TfdA dioxygenase family. Fe(2+) serves as cofactor.

It carries out the reaction a primary linear alkyl sulfate ester + 2-oxoglutarate + O2 = an aldehyde + sulfate + succinate + CO2 + H(+). It catalyses the reaction 2-ethylhexyl sulfate + 2-oxoglutarate + O2 = 2-ethylhexanal + sulfate + succinate + CO2 + H(+). The catalysed reaction is hexyl sulfate + 2-oxoglutarate + O2 = hexanal + sulfate + succinate + CO2 + H(+). The enzyme catalyses pentyl sulfate + 2-oxoglutarate + O2 = pentanal + sulfate + succinate + CO2 + H(+). It carries out the reaction heptyl sulfate + 2-oxoglutarate + O2 = heptanal + sulfate + succinate + CO2 + H(+). Its function is as follows. Alpha-ketoglutarate-dependent sulfate ester dioxygenase, which oxidizes medium-chain alkyl-sulfate esters. Shows preference for 2-ethylhexyl sulfate (2-EHS) in vitro, leading to the formation of succinate and 2-ethylhexanal. Has likely a role in sulfate scavenging in vivo. In terms of biological role, also causes the inactivation of the 2-carboxyquinoxaline Ty38c (an antitubercular compound that inhibits DprE1) via oxidative decarboxylation, using Ty38c instead of alpha-ketoglutarate as a substrate. Is thus responsible for primary resistance of M.tuberculosis to Ty38c in vitro. Overexpression of Rv3406 causes resistance to Ty38c. The polypeptide is Alpha-ketoglutarate-dependent sulfate ester dioxygenase (Mycobacterium tuberculosis (strain ATCC 25618 / H37Rv)).